Consider the following 63-residue polypeptide: Odorranain-B1 (63 aa).

The first 22 residues, 1–22, serve as a signal peptide directing secretion; it reads MFTTKKPLLLLFFLGIISLSVC. Residues 23 to 41 constitute a propeptide that is removed on maturation; that stretch reads EQERDADEEDGGEVTEEEV.

The protein belongs to the frog skin active peptide (FSAP) family. Brevinin subfamily. Expressed by the skin glands.

The protein localises to the secreted. This chain is Odorranain-B1, found in Odorrana hainanensis (Odor frog).